Reading from the N-terminus, the 319-residue chain is Acetyl-coenzyme A carboxylase carboxyl transferase subunit alpha (319 aa).

Positions 35 to 296 (NIDEEVHRLR…KAQLLADLAD (262 aa)) constitute a CoA carboxyltransferase C-terminal domain.

The protein belongs to the AccA family. In terms of assembly, acetyl-CoA carboxylase is a heterohexamer composed of biotin carboxyl carrier protein (AccB), biotin carboxylase (AccC) and two subunits each of ACCase subunit alpha (AccA) and ACCase subunit beta (AccD).

Its subcellular location is the cytoplasm. The enzyme catalyses N(6)-carboxybiotinyl-L-lysyl-[protein] + acetyl-CoA = N(6)-biotinyl-L-lysyl-[protein] + malonyl-CoA. It functions in the pathway lipid metabolism; malonyl-CoA biosynthesis; malonyl-CoA from acetyl-CoA: step 1/1. Component of the acetyl coenzyme A carboxylase (ACC) complex. First, biotin carboxylase catalyzes the carboxylation of biotin on its carrier protein (BCCP) and then the CO(2) group is transferred by the carboxyltransferase to acetyl-CoA to form malonyl-CoA. The polypeptide is Acetyl-coenzyme A carboxylase carboxyl transferase subunit alpha (Klebsiella pneumoniae (strain 342)).